Reading from the N-terminus, the 65-residue chain is Disintegrin CC8A (65 aa).

A Disintegrin domain is found at 1–65; that stretch reads MNSAHPCCDP…SDCPRNRIKK (65 aa). Intrachain disulfides connect C7-C30, C21-C27, C26-C51, and C39-C58. Residues 43–45 carry the Cell attachment site motif; it reads RGD.

It belongs to the disintegrin family. Dimeric disintegrin subfamily. As to quaternary structure, heterodimer with CC8B; disulfide-linked. Expressed by the venom gland.

The protein localises to the secreted. Its function is as follows. Inhibits integrins alpha-IIb/beta-3 (ITGA2B/ITGB3), alpha-V/beta-3 (ITGAV/ITGB3), and alpha-5/beta-1 (ITGA5/ITGB1). The chain is Disintegrin CC8A from Cerastes cerastes (Horned desert viper).